Reading from the N-terminus, the 286-residue chain is ATP synthase gamma chain (286 aa).

This sequence belongs to the ATPase gamma chain family. In terms of assembly, F-type ATPases have 2 components, CF(1) - the catalytic core - and CF(0) - the membrane proton channel. CF(1) has five subunits: alpha(3), beta(3), gamma(1), delta(1), epsilon(1). CF(0) has three main subunits: a, b and c.

It localises to the cell inner membrane. Functionally, produces ATP from ADP in the presence of a proton gradient across the membrane. The gamma chain is believed to be important in regulating ATPase activity and the flow of protons through the CF(0) complex. This Teredinibacter turnerae (strain ATCC 39867 / T7901) protein is ATP synthase gamma chain.